The following is a 416-amino-acid chain: Squamosa promoter-binding-like protein 8 (416 aa).

Residues 11 to 53 (SSCDDFGYNATPPPPPSLLPIMDQDGGGGSIQRDHHHHHNHQQ) are disordered. The segment at 182–260 (PPRCQAEGCK…ADHNRRRRKS (79 aa)) adopts an SBP-type zinc-finger fold. 8 residues coordinate Zn(2+): Cys185, Cys190, Cys207, His210, Cys227, Cys230, His234, and Cys246. The short motif at 243-259 (KKSCRKRLADHNRRRRK) is the Bipartite nuclear localization signal element. Residues 250–299 (LADHNRRRRKSKPSDGEHSGEKRRAQANKSAATKDKAGSSSKNAGIGDGF) form a disordered region. Positions 261–273 (KPSDGEHSGEKRR) are enriched in basic and acidic residues.

As to expression, expressed in stems, leaf sheaths, and young panicles.

It localises to the nucleus. Its function is as follows. Probable transcription factor that plays an important role in building the laminar joint between leaf blade and leaf sheath boundary, thereby controlling ligule and auricle development. The sequence is that of Squamosa promoter-binding-like protein 8 (SPL8) from Oryza sativa subsp. indica (Rice).